We begin with the raw amino-acid sequence, 64 residues long: Large ribosomal subunit protein bL28 (64 aa).

The protein belongs to the bacterial ribosomal protein bL28 family.

This is Large ribosomal subunit protein bL28 from Mycoplasmoides gallisepticum (strain R(low / passage 15 / clone 2)) (Mycoplasma gallisepticum).